A 143-amino-acid chain; its full sequence is MAIERTFSIVKPDAVAKNFIGQIYNRFETAGLKIVASKMIHLSQEKAEGFYAEHSERPFFGALVEFMTSGPVMVQVLEGENAVLKNREIMGATNPAEALAGTIRADLADSIDENAAHGSDALESAAREIAYFFSDDEICARTR.

ATP is bound by residues Lys11, Phe59, Arg87, Thr93, Arg104, and Asn114. The active-site Pros-phosphohistidine intermediate is the His117.

It belongs to the NDK family. Homotetramer. It depends on Mg(2+) as a cofactor.

The protein resides in the cytoplasm. It carries out the reaction a 2'-deoxyribonucleoside 5'-diphosphate + ATP = a 2'-deoxyribonucleoside 5'-triphosphate + ADP. The enzyme catalyses a ribonucleoside 5'-diphosphate + ATP = a ribonucleoside 5'-triphosphate + ADP. Functionally, major role in the synthesis of nucleoside triphosphates other than ATP. The ATP gamma phosphate is transferred to the NDP beta phosphate via a ping-pong mechanism, using a phosphorylated active-site intermediate. This chain is Nucleoside diphosphate kinase, found in Colwellia psychrerythraea (strain 34H / ATCC BAA-681) (Vibrio psychroerythus).